We begin with the raw amino-acid sequence, 353 residues long: Chemerin-like receptor 2 (353 aa).

At 1 to 41 the chain is on the extracellular side; the sequence is MEVSKEMLFEELDNYSYALDYYSQESDPEEKVYLGLVHWIS. An N-linked (GlcNAc...) asparagine glycan is attached at Asn14. The helical transmembrane segment at 42–62 threads the bilayer; sequence LFLYALAFVLGIPGNAIVIWL. Topologically, residues 63–73 are cytoplasmic; it reads MGFKWKKTVTT. The helical transmembrane segment at 74–94 threads the bilayer; that stretch reads LWFLNLAIADFIFVLFLPLYI. Topologically, residues 95–112 are extracellular; that stretch reads SYVALSFHWPFGLWLCKV. A disulfide bridge connects residues Cys110 and Cys187. Residues 113 to 133 traverse the membrane as a helical segment; the sequence is NSFIAQLNMFSSVFFLTVISL. The Cytoplasmic portion of the chain corresponds to 134–154; that stretch reads DRYIHLLHPGLSHRHRTLKSS. Residues 155–175 traverse the membrane as a helical segment; the sequence is LVVVILVWLLASLLGGPTLYF. Over 176-210 the chain is Extracellular; the sequence is RDTMEVNNHIICYNNFQEHELTLMRHHVLTWVKFL. A helical membrane pass occupies residues 211 to 231; that stretch reads FGYLFPLLTMSSCYLCLIFKM. At 232–247 the chain is on the cytoplasmic side; sequence KKRNILISRKHLWMIL. Residues 248–268 form a helical membrane-spanning segment; it reads SVVIAFLVCWTPYHLFSIWEL. Over 269–286 the chain is Extracellular; sequence SIHHNSSFQNVLQGGIPL. The helical transmembrane segment at 287 to 307 threads the bilayer; the sequence is STGLAFLNSCLNPILYVLISK. Residues 308–353 lie on the Cytoplasmic side of the membrane; sequence TFQARFRASVAEVLKRSLWEASCSGTVSEQLRSAETKSLSLLETAQ.

The protein belongs to the chemokine-like receptor (CMKLR) family. As to expression, high expressed in white adipose tissue and skeletal muscle. Expressed in hippocampus and cortex.

The protein resides in the cell membrane. Functionally, receptor for chemoattractant adipokine chemerin/RARRES2 suggesting a role for this receptor in the regulation of inflammation and energy homesotasis. Signals mainly via beta-arrestin pathway. Binding of RARRES2 activates weakly G proteins, calcium mobilization and MAPK1/MAPK3 (ERK1/2) phosphorylation too. Acts also as a receptor for TAFA1, mediates its effects on neuronal stem-cell proliferation and differentiation via the activation of ROCK/ERK and ROCK/STAT3 signaling pathway. In Mus musculus (Mouse), this protein is Chemerin-like receptor 2 (Cmklr2).